We begin with the raw amino-acid sequence, 143 residues long: Na(+)/H(+) antiporter subunit B (143 aa).

4 helical membrane passes run 9-31 (LILQTATKLVSFIILLFSFYLFL), 36-58 (APGGGFVGGLITSSSIVLLLLAY), 71-93 (FIYVAGAGLLLAVLTGVGSFVFG), and 117-139 (ATIFDLGVYLVVVGITMTIIQTI).

This sequence belongs to the CPA3 antiporters (TC 2.A.63) subunit B family. In terms of assembly, forms a heterooligomeric complex that consists of seven subunits: MrpA, MrpB, MrpC, MrpD, MrpE, MrpF and MrpG.

The protein localises to the cell membrane. Its function is as follows. Mrp complex is a Na(+)/H(+) antiporter that is considered to be the major Na(+) excretion system in B.subtilis. Has a major role in Na(+) resistance and a minor role in Na(+)- and K(+)-dependent pH homeostasis as compared to TetB. MrpA may be the actual Na(+)/H(+) antiporter, although the six other Mrp proteins are all required for Na(+)/H(+) antiport activity and Na(+) resistance. MrpA is required for initiation of sporulation when external Na(+) concentration increases. Also transports Li(+) but not K(+), Ca(2+) or Mg(2+). In Bacillus subtilis (strain 168), this protein is Na(+)/H(+) antiporter subunit B (mrpB).